Reading from the N-terminus, the 467-residue chain is tRNA modification GTPase MnmE (467 aa).

Positions 30, 92, and 131 each coordinate (6S)-5-formyl-5,6,7,8-tetrahydrofolate. Residues 226–388 (GLKVAIIGRP…LEAAILNAVN (163 aa)) form the TrmE-type G domain. Asparagine 236 contributes to the K(+) binding site. Residues 236–241 (NVGKSS), 255–261 (TDLPGTT), and 280–283 (DTAG) each bind GTP. Residue serine 240 coordinates Mg(2+). Residues threonine 255, leucine 257, and threonine 260 each coordinate K(+). Threonine 261 provides a ligand contact to Mg(2+). Lysine 467 contributes to the (6S)-5-formyl-5,6,7,8-tetrahydrofolate binding site.

The protein belongs to the TRAFAC class TrmE-Era-EngA-EngB-Septin-like GTPase superfamily. TrmE GTPase family. In terms of assembly, homodimer. Heterotetramer of two MnmE and two MnmG subunits. The cofactor is K(+).

The protein localises to the cytoplasm. Functionally, exhibits a very high intrinsic GTPase hydrolysis rate. Involved in the addition of a carboxymethylaminomethyl (cmnm) group at the wobble position (U34) of certain tRNAs, forming tRNA-cmnm(5)s(2)U34. The sequence is that of tRNA modification GTPase MnmE from Trichodesmium erythraeum (strain IMS101).